The sequence spans 353 residues: Dihydroorotate dehydrogenase (quinone) (353 aa).

Residues 66–70 (AGFDK) and threonine 90 each bind FMN. A substrate-binding site is contributed by lysine 70. Position 115 to 119 (115 to 119 (NRMGF)) interacts with substrate. Positions 143 and 176 each coordinate FMN. Asparagine 176 lines the substrate pocket. Serine 179 (nucleophile) is an active-site residue. Asparagine 181 serves as a coordination point for substrate. Residues lysine 212 and threonine 240 each coordinate FMN. Position 241-242 (241-242 (NT)) interacts with substrate. FMN-binding positions include glycine 264, glycine 293, and 314–315 (YT).

Belongs to the dihydroorotate dehydrogenase family. Type 2 subfamily. In terms of assembly, monomer. The cofactor is FMN.

The protein localises to the cell membrane. It catalyses the reaction (S)-dihydroorotate + a quinone = orotate + a quinol. It functions in the pathway pyrimidine metabolism; UMP biosynthesis via de novo pathway; orotate from (S)-dihydroorotate (quinone route): step 1/1. Functionally, catalyzes the conversion of dihydroorotate to orotate with quinone as electron acceptor. This chain is Dihydroorotate dehydrogenase (quinone), found in Mycolicibacterium vanbaalenii (strain DSM 7251 / JCM 13017 / BCRC 16820 / KCTC 9966 / NRRL B-24157 / PYR-1) (Mycobacterium vanbaalenii).